A 220-amino-acid chain; its full sequence is Ras-related protein Rab-3 (220 aa).

Residues Ser-30, Gly-33, Lys-34, Thr-35, Ser-36, Thr-47, Ser-48, Ser-52, Thr-53, Gly-79, Asn-134, Asp-137, Ala-165, and Lys-166 each coordinate GTP. Thr-35 is a binding site for Mg(2+). The Effector region motif lies at 50-58 (FVSTVGIDF). Position 53 (Thr-53) interacts with Mg(2+). Residues 194 to 220 (PTLVGGGQKGQRLTDQPQGTPNANCNC) form a disordered region. A compositionally biased stretch (polar residues) spans 204–220 (QRLTDQPQGTPNANCNC). 2 S-geranylgeranyl cysteine lipidation sites follow: Cys-218 and Cys-220. Cys-220 bears the Cysteine methyl ester mark.

This sequence belongs to the small GTPase superfamily. Rab family. In terms of assembly, interacts with Rph.

The protein resides in the cytoplasmic vesicle. The protein localises to the secretory vesicle. It is found in the synaptic vesicle. In terms of biological role, involved in exocytosis by regulating a late step in synaptic vesicle fusion. Could play a role in neurotransmitter release by regulating membrane flow in the nerve terminal. This Drosophila melanogaster (Fruit fly) protein is Ras-related protein Rab-3 (Rab3).